A 481-amino-acid chain; its full sequence is RAC-beta serine/threonine-protein kinase (481 aa).

Residue Met-1 is modified to N-acetylmethionine. A PH domain is found at 5-108 (SVIKEGWLHK…WIRAIQMVAN (104 aa)). Ser-34 is modified (phosphoserine). Cys-60 and Cys-77 are joined by a disulfide. The residue at position 126 (Ser-126) is a Phosphoserine. O-linked (GlcNAc) serine glycosylation is found at Ser-128 and Ser-131. In terms of domain architecture, Protein kinase spans 152-409 (FDYLKLLGKG…AKEVMEHRFF (258 aa)). ATP contacts are provided by residues 158-166 (LGKGTFGKV) and Lys-181. Asp-275 serves as the catalytic Proton acceptor. Mn(2+) contacts are provided by Asn-280 and Asp-293. An O-linked (GlcNAc) threonine glycan is attached at Thr-306. Thr-309 bears the Phosphothreonine; by PDPK1 mark. Thr-313 carries an O-linked (GlcNAc) threonine glycan. The region spanning 410-481 (LSINWQDVVQ…QFSYSASIRE (72 aa)) is the AGC-kinase C-terminal domain. Ser-447 bears the Phosphoserine mark. Thr-451 carries the post-translational modification Phosphothreonine. 3 positions are modified to phosphoserine: Ser-461, Ser-474, and Ser-478. Ser-474 carries an O-linked (GlcNAc) serine; alternate glycan.

This sequence belongs to the protein kinase superfamily. AGC Ser/Thr protein kinase family. RAC subfamily. As to quaternary structure, interacts with BTBD10. Interacts with KCTD20. Interacts (via PH domain) with MTCP1, TCL1A and TCL1B; this interaction may facilitate AKT2 oligomerization and phosphorylation, hence increasing kinase activity. Interacts with PHB2; this interaction may be important for myogenic differentiation. Interacts (when phosphorylated) with CLIP3; this interaction promotes cell membrane localization. Interacts with WDFY2 (via WD repeats 1-3). Post-translationally, phosphorylation on Thr-309 and Ser-474 is required for full activity. Phosphorylation of the activation loop at Thr-309 by PDPK1/PDK1 is a prerequisite for full activation. Phosphorylated and activated by PDPK1/PDK1 in the presence of phosphatidylinositol 3,4,5-trisphosphate. Phosphorylation by mTORC2 in response to growth factors plays a key role in AKT1 activation: mTORC2 phosphorylates different sites depending on the context, such as Ser-474 or Ser-478, thereby facilitating subsequent phosphorylation of the activation loop by PDPK1/PDK1. In terms of processing, ubiquitinated; undergoes both 'Lys-48'- and 'Lys-63'-linked polyubiquitination. TRAF6-induced 'Lys-63'-linked AKT2 ubiquitination. When fully phosphorylated and translocated into the nucleus, undergoes 'Lys-48'-polyubiquitination catalyzed by TTC3, leading to its degradation by the proteasome. O-GlcNAcylation at Thr-306 and Thr-313 inhibits activating phosphorylation at Thr-309 via disrupting the interaction between AKT and PDPK1/PDK1. In terms of tissue distribution, expressed in adipocytes and hepatocytes (at protein level). Expressed at low levels in skeletal muscle (at protein level).

The protein resides in the cytoplasm. It is found in the nucleus. Its subcellular location is the cell membrane. It localises to the early endosome. It carries out the reaction L-seryl-[protein] + ATP = O-phospho-L-seryl-[protein] + ADP + H(+). The catalysed reaction is L-threonyl-[protein] + ATP = O-phospho-L-threonyl-[protein] + ADP + H(+). With respect to regulation, phosphorylation at Thr-309 (in the kinase domain) and Ser-474 (in the C-terminal regulatory region) is required for full activation. In adipocytes and hepatocytes, the activation is induced by insulin. AKT2 phosphorylation of PKP1 is induced by insulin. Serine/threonine kinase closely related to AKT1 and AKT3. All 3 enzymes, AKT1, AKT2 and AKT3, are collectively known as AKT kinase. AKT regulates many processes including metabolism, proliferation, cell survival, growth and angiogenesis, through the phosphorylation of a range of downstream substrates. Over 100 substrates have been reported so far, although for most of them, the precise AKT kinase catalyzing the reaction was not specified. AKT regulates glucose uptake by mediating insulin-induced translocation of the SLC2A4/GLUT4 glucose transporter to the cell surface. Phosphorylation of PTPN1 at 'Ser-50' negatively modulates its phosphatase activity preventing dephosphorylation of the insulin receptor and the attenuation of insulin signaling. Phosphorylation of TBC1D4 triggers the binding of this effector to inhibitory 14-3-3 proteins, which is required for insulin-stimulated glucose transport. AKT also regulates the storage of glucose in the form of glycogen by phosphorylating GSK3A at 'Ser-21' and GSK3B at 'Ser-9', resulting in inhibition of its kinase activity. Phosphorylation of GSK3 isoforms by AKT is also thought to be one mechanism by which cell proliferation is driven. AKT also regulates cell survival via the phosphorylation of MAP3K5 (apoptosis signal-related kinase). Phosphorylation of 'Ser-83' decreases MAP3K5 kinase activity stimulated by oxidative stress and thereby prevents apoptosis. AKT mediates insulin-stimulated protein synthesis by phosphorylating TSC2 at 'Ser-939' and 'Thr-1462', thereby activating mTORC1 signaling and leading to both phosphorylation of 4E-BP1 and in activation of RPS6KB1. AKT is involved in the phosphorylation of members of the FOXO factors (Forkhead family of transcription factors), leading to binding of 14-3-3 proteins and cytoplasmic localization. In particular, FOXO1 is phosphorylated at 'Thr-24', 'Ser-256' and 'Ser-319'. FOXO3 and FOXO4 are phosphorylated on equivalent sites. AKT has an important role in the regulation of NF-kappa-B-dependent gene transcription and positively regulates the activity of CREB1 (cyclic AMP (cAMP)-response element binding protein). The phosphorylation of CREB1 induces the binding of accessory proteins that are necessary for the transcription of pro-survival genes such as BCL2 and MCL1. AKT phosphorylates 'Ser-454' on ATP citrate lyase (ACLY), thereby potentially regulating ACLY activity and fatty acid synthesis. Activates the 3B isoform of cyclic nucleotide phosphodiesterase (PDE3B) via phosphorylation of 'Ser-273', resulting in reduced cyclic AMP levels and inhibition of lipolysis. Phosphorylates PIKFYVE on 'Ser-318', which results in increased PI(3)P-5 activity. The Rho GTPase-activating protein DLC1 is another substrate and its phosphorylation is implicated in the regulation cell proliferation and cell growth. AKT plays a role as key modulator of the AKT-mTOR signaling pathway controlling the tempo of the process of newborn neurons integration during adult neurogenesis, including correct neuron positioning, dendritic development and synapse formation. Signals downstream of phosphatidylinositol 3-kinase (PI(3)K) to mediate the effects of various growth factors such as platelet-derived growth factor (PDGF), epidermal growth factor (EGF), insulin and insulin-like growth factor 1 (IGF1). AKT mediates the antiapoptotic effects of IGF1. Essential for the SPATA13-mediated regulation of cell migration and adhesion assembly and disassembly. May be involved in the regulation of the placental development. In response to lysophosphatidic acid stimulation, inhibits the ciliogenesis cascade. In this context, phosphorylates WDR44, hence stabilizing its interaction with Rab11 and preventing the formation of the ciliogenic Rab11-FIP3-RAB3IP complex. Also phosphorylates RAB3IP/Rabin8, thus may affect RAB3IP guanine nucleotide exchange factor (GEF) activity toward Rab8, which is important for cilia growth. Phosphorylates PKP1, facilitating its interaction with YWHAG and translocation to the nucleus, ultimately resulting in a reduction in keratinocyte intercellular adhesion. Phosphorylation of PKP1 increases PKP1 protein stability, translocation to the cytoplasm away from desmosome plaques and PKP1-driven cap-dependent translation. In terms of biological role, several AKT2-specific substrates have been identified, including ANKRD2, C2CD5, CLK2 and PITX2. May play a role in myoblast differentiation. In this context, may act through PITX2 phosphorylation. Unphosphorylated PITX2 associates with an ELAVL1/HuR-containing complex, which stabilizes cyclin mRNA and ensuring cell proliferation. Phosphorylation by AKT2 impairs this association, leading to CCND1 mRNA destabilization and progression towards differentiation. Also involved in the negative regulation of myogenesis in response to stress conditions. In this context, acts by phosphorylating ANKRD2. May also be a key regulator of glucose uptake. Regulates insulin-stimulated glucose transport by the increase of glucose transporter GLUT4 translocation from intracellular stores to the plasma membrane. In this context, acts by phosphorylating C2CD5/CDP138 on 'Ser-197' in insulin-stimulated adipocytes. Through the phosphorylation of CLK2 on 'Thr-343', involved in insulin-regulated suppression of hepatic gluconeogenesis. The sequence is that of RAC-beta serine/threonine-protein kinase from Rattus norvegicus (Rat).